The sequence spans 109 residues: Nucleoid-associated protein VP2178 (109 aa).

2 disordered regions span residues 1–22 (MFGK…ERMQ) and 88–109 (QKEK…KMPF).

This sequence belongs to the YbaB/EbfC family. As to quaternary structure, homodimer.

It is found in the cytoplasm. The protein localises to the nucleoid. Its function is as follows. Binds to DNA and alters its conformation. May be involved in regulation of gene expression, nucleoid organization and DNA protection. This Vibrio parahaemolyticus serotype O3:K6 (strain RIMD 2210633) protein is Nucleoid-associated protein VP2178.